Reading from the N-terminus, the 105-residue chain is MANTPKTLIAFVFSVIVIISYVHCHTTIASAPSSGEPTTYATGPALSKHSHDNDGICFVTPACFAPGQYEIGCIVYCHESHYKHYKCVNRSCCCYNTDKNASELK.

The first 24 residues, 1-24 (MANTPKTLIAFVFSVIVIISYVHC), serve as a signal peptide directing secretion. 4 disulfide bridges follow: Cys57-Cys94, Cys63-Cys87, Cys73-Cys92, and Cys77-Cys93.

This sequence belongs to the DEFL family.

Its subcellular location is the secreted. This Arabidopsis thaliana (Mouse-ear cress) protein is Defensin-like protein 106.